The primary structure comprises 364 residues: 4-hydroxythreonine-4-phosphate dehydrogenase (364 aa).

2 residues coordinate substrate: His148 and Thr149. Residues His177, His216, and His301 each coordinate a divalent metal cation. Substrate-binding residues include Lys309, Asn318, and Arg327.

This sequence belongs to the PdxA family. Homodimer. Requires Zn(2+) as cofactor. Mg(2+) serves as cofactor. The cofactor is Co(2+).

It is found in the cytoplasm. The catalysed reaction is 4-(phosphooxy)-L-threonine + NAD(+) = 3-amino-2-oxopropyl phosphate + CO2 + NADH. Its pathway is cofactor biosynthesis; pyridoxine 5'-phosphate biosynthesis; pyridoxine 5'-phosphate from D-erythrose 4-phosphate: step 4/5. Catalyzes the NAD(P)-dependent oxidation of 4-(phosphooxy)-L-threonine (HTP) into 2-amino-3-oxo-4-(phosphooxy)butyric acid which spontaneously decarboxylates to form 3-amino-2-oxopropyl phosphate (AHAP). In Campylobacter jejuni subsp. jejuni serotype O:2 (strain ATCC 700819 / NCTC 11168), this protein is 4-hydroxythreonine-4-phosphate dehydrogenase.